The chain runs to 238 residues: 6-phosphogluconolactonase (238 aa).

The protein belongs to the glucosamine/galactosamine-6-phosphate isomerase family. 6-phosphogluconolactonase subfamily.

The catalysed reaction is 6-phospho-D-glucono-1,5-lactone + H2O = 6-phospho-D-gluconate + H(+). It participates in carbohydrate degradation; pentose phosphate pathway; D-ribulose 5-phosphate from D-glucose 6-phosphate (oxidative stage): step 2/3. Its function is as follows. Hydrolysis of 6-phosphogluconolactone to 6-phosphogluconate. This Pseudomonas aeruginosa (strain ATCC 15692 / DSM 22644 / CIP 104116 / JCM 14847 / LMG 12228 / 1C / PRS 101 / PAO1) protein is 6-phosphogluconolactonase (pgl).